Here is a 484-residue protein sequence, read N- to C-terminus: Fumigaclavine B O-acetyltransferase ifgI (484 aa).

It belongs to the fumigaclavine B O-acetyltransferase family. As to quaternary structure, monomer.

It catalyses the reaction fumigaclavine B + acetyl-CoA = fumigaclavine A + CoA. The protein operates within alkaloid biosynthesis; ergot alkaloid biosynthesis. In terms of biological role, fumigaclavine B O-acetyltransferase; part of the gene cluster that mediates the biosynthesis of isofumigaclavines, fungal ergot alkaloids. The tryptophan dimethylallyltransferase ifgA catalyzes the first step of ergot alkaloid biosynthesis by condensing dimethylallyl diphosphate (DMAP) and tryptophan to form 4-dimethylallyl-L-tryptophan. The second step is catalyzed by the methyltransferase ifgB that methylates 4-dimethylallyl-L-tryptophan in the presence of S-adenosyl-L-methionine, resulting in the formation of N-methyl-dimethylallyl-L-tryptophan. The catalase ifgD and the FAD-dependent oxidoreductase ifgC then transform N-methyl-dimethylallyl-L-tryptophan to chanoclavine-I which is further oxidized by ifgE in the presence of NAD(+), resulting in the formation of chanoclavine-I aldehyde. The chanoclavine-I aldehyde reductases ifgG and/or fgaOx3 reduce chanoclavine-I aldehyde to dihydrochanoclavine-I aldehyde that spontaneously dehydrates to form 6,8-dimethyl-6,7-didehydroergoline. The festuclavine dehydrogenases ifgF1 and/or ifgF2 then catalyze the reduction of 6,8-dimethyl-6,7-didehydroergoline to form festuclavine. Hydrolysis of festuclavine by a yet undetermined cytochrome P450 monooxygenase (called ifgH) then leads to the formation of isofumigaclavine B which is in turn acetylated by ifgI to isofumigaclavine A. Penicillium roqueforti has interestingly at least two sets of genes for the consumption of chanoclavine-I aldehyde on three different loci, the OYEs ifgG/fgaOx3 and the festuclavine synthase homologs ifgF1/ifgF2. The reason for the duplication of these genes is unclear, probably to ensure the conversion of chanoclavine-I aldehyde by differential gene expression under various environmental conditions. The protein is Fumigaclavine B O-acetyltransferase ifgI of Penicillium roqueforti (strain FM164).